A 244-amino-acid polypeptide reads, in one-letter code: MILFPAIDLKDGQCVRLKLGDMEQATVYNPDPGAQAKAFEDQGFEWLHVVDLNGAFAGESVNGAAVDAILKATKNPVQLGGGIRSLAHIETWLQHGLSRVILGTVAVRDPALVIEACKLFPGKIAVGIDAKGGKVAVEGWAEASELGVVELAKKFEGAGVAAIIYTDIDRDGILTGINWESTLELADAVSIPVIASGGLASIEDIRRMLEPDARKLEGAISGRALYDGRIDPAEALALIQAAKG.

The Proton acceptor role is filled by Asp8. The Proton donor role is filled by Asp129.

This sequence belongs to the HisA/HisF family.

Its subcellular location is the cytoplasm. The catalysed reaction is 1-(5-phospho-beta-D-ribosyl)-5-[(5-phospho-beta-D-ribosylamino)methylideneamino]imidazole-4-carboxamide = 5-[(5-phospho-1-deoxy-D-ribulos-1-ylimino)methylamino]-1-(5-phospho-beta-D-ribosyl)imidazole-4-carboxamide. It functions in the pathway amino-acid biosynthesis; L-histidine biosynthesis; L-histidine from 5-phospho-alpha-D-ribose 1-diphosphate: step 4/9. This chain is 1-(5-phosphoribosyl)-5-[(5-phosphoribosylamino)methylideneamino] imidazole-4-carboxamide isomerase, found in Allorhizobium ampelinum (strain ATCC BAA-846 / DSM 112012 / S4) (Agrobacterium vitis (strain S4)).